The sequence spans 306 residues: Protease HtpX homolog (306 aa).

2 helical membrane passes run 10 to 30 and 33 to 53; these read TTLL…ATGG and QTLS…YWFS. Residue H135 participates in Zn(2+) binding. E136 is an active-site residue. H139 serves as a coordination point for Zn(2+). 2 helical membrane-spanning segments follow: residues 149–169 and 181–201; these read AIAS…MYFG and GLGL…ASLI. E210 provides a ligand contact to Zn(2+).

The protein belongs to the peptidase M48B family. Requires Zn(2+) as cofactor.

It localises to the cell membrane. The chain is Protease HtpX homolog from Bifidobacterium longum (strain NCC 2705).